We begin with the raw amino-acid sequence, 145 residues long: Eukaryotic translation initiation factor 1A (145 aa).

Residues 1–15 (MPKNKGKGGKNRKRG) show a composition bias toward basic residues. The tract at residues 1–25 (MPKNKGKGGKNRKRGKNEADDDKRE) is disordered. Over residues 16 to 25 (KNEADDDKRE) the composition is skewed to basic and acidic residues. The 75-residue stretch at 22–96 (DKRELVFKED…DKADVILKLM (75 aa)) folds into the S1-like domain.

It belongs to the eIF-1A family.

Seems to be required for maximal rate of protein biosynthesis. Enhances ribosome dissociation into subunits and stabilizes the binding of the initiator Met-tRNA(I) to 40 S ribosomal subunits. This chain is Eukaryotic translation initiation factor 1A, found in Onobrychis viciifolia (Common sainfoin).